The primary structure comprises 375 residues: POU domain, class 3, transcription factor 1 (375 aa).

Disordered stretches follow at residues 1–29 (MAAT…RMHQ), 56–139 (MSLT…QPLI), and 151–200 (MLGP…PSSD). 3 stretches are compositionally biased toward polar residues: residues 107 to 117 (VHQQTPSSHAW), 130 to 139 (PGSNSHQPLI), and 151 to 160 (MLGPQASSLH). Residues 162-171 (SMRDPLHDDP) show a composition bias toward basic and acidic residues. In terms of domain architecture, POU-specific spans 194–268 (EDAPSSDDLE…LLNKWLEETD (75 aa)). The segment at residues 286–345 (KRKKRTSIEVGVKGALENHFLKCPKPSAHEITSLADSLQLEKEVVRVWFCNRRQKEKRMT) is a DNA-binding region (homeobox).

The protein belongs to the POU transcription factor family. Class-3 subfamily.

Its subcellular location is the nucleus. Its function is as follows. Acts as a transcription factor. May play a role in neuronal differentiation. In Xenopus tropicalis (Western clawed frog), this protein is POU domain, class 3, transcription factor 1.